Here is a 95-residue protein sequence, read N- to C-terminus: Small ribosomal subunit protein uS14 (95 aa).

It belongs to the universal ribosomal protein uS14 family. Part of the 30S ribosomal subunit. Contacts proteins S3 and S10.

Binds 16S rRNA, required for the assembly of 30S particles and may also be responsible for determining the conformation of the 16S rRNA at the A site. The polypeptide is Small ribosomal subunit protein uS14 (rpsN) (Carsonella ruddii).